We begin with the raw amino-acid sequence, 356 residues long: Protein-L-isoaspartate O-methyltransferase domain-containing protein 1 (356 aa).

Gly-2 carries N-myristoyl glycine lipidation. Ser-64 is an active-site residue. 3 adoMet binding motif regions span residues 85–94 (LNLGSGTGYL), 160–164 (YDRIY), and 181–191 (LKVGGILVMPI). Positions 240–250 (VRNLQDLARIY) are BC-box. Residues 299-331 (PLDSEEDEKMEEDKEEEEKEPGEALKPEEPPQN) form a disordered region. Residues 301 to 318 (DSEEDEKMEEDKEEEEKE) show a composition bias toward acidic residues. Residues 319–331 (PGEALKPEEPPQN) show a composition bias toward basic and acidic residues. Positions 340 to 343 (LPLP) are CUL-box.

Belongs to the methyltransferase superfamily. L-isoaspartyl/D-aspartyl protein methyltransferase family. In terms of assembly, component of the probable ECS(PCMTD1) E3 ubiquitin-protein ligase complex, at least composed of CUL5, ELOB, ELOC, RBX2 and PCMTD1. Interacts (via the BC-box) with ELOB and ELOC; the interaction is direct and stabilizes PCMTD1.

It localises to the cytoplasm. The protein resides in the membrane. In terms of biological role, substrate recognition component of an ECS (Elongin BC-CUL5-SOCS-box protein) E3 ubiquitin ligase complex which mediates the ubiquitination and subsequent proteasomal degradation of target proteins. Specifically binds to the methyltransferase cofactor S-adenosylmethionine (AdoMet) via the N-terminal AdoMet binding motif, but does not display methyltransferase activity. May provide an alternate maintenance pathway for modified proteins by acting as a damage-specific E3 ubiquitin ligase adaptor protein. This is Protein-L-isoaspartate O-methyltransferase domain-containing protein 1 (PCMTD1) from Bos taurus (Bovine).